A 122-amino-acid chain; its full sequence is Large ribosomal subunit protein uL14 (122 aa).

This sequence belongs to the universal ribosomal protein uL14 family. In terms of assembly, part of the 50S ribosomal subunit. Forms a cluster with proteins L3 and L19. In the 70S ribosome, L14 and L19 interact and together make contacts with the 16S rRNA in bridges B5 and B8.

In terms of biological role, binds to 23S rRNA. Forms part of two intersubunit bridges in the 70S ribosome. The protein is Large ribosomal subunit protein uL14 of Shewanella frigidimarina (strain NCIMB 400).